A 1903-amino-acid chain; its full sequence is Plexin-A4 (1903 aa).

An N-terminal signal peptide occupies residues 1 to 26 (MAFHNRRWNFTFSCCVVVLLLPLVAA). A Sema domain is found at 27 to 515 (RPQQPSAATR…SESQLTRVPV (489 aa)). At 27–1246 (RPQQPSAATR…ITSDSPLSST (1220 aa)) the chain is on the extracellular side. Cystine bridges form between C97–C106 and C132–C140. N-linked (GlcNAc...) asparagine glycosylation is present at N166. Cystine bridges form between C291–C413, C307–C364, and C382–C401. An N-linked (GlcNAc...) asparagine glycan is attached at N450. The 51-residue stretch at 517 to 567 (ACEQYSSCNECLGSGDPHCGWCVLHSMCTRKEKCERSSEPRRFASNIKQCV) folds into the PSI 1 domain. 4 cysteine pairs are disulfide-bonded: C518/C535, C524/C566, C527/C544, and C538/C550. N575 and N600 each carry an N-linked (GlcNAc...) asparagine glycan. A disulfide bridge links C601 with C620. N-linked (GlcNAc...) asparagine glycans are attached at residues N656, N663, N764, and N772. The PSI 2 domain occupies 663-710 (NCSVHKSCLSCVGSPYQCHWCKYRHTCTHDPSSCSFQEGRVKQPEECP). A PSI 3 domain is found at 811–864 (KCDARRESCGLCLKADPLFGCVWCKGENRCSLKQHCSYPQSMWLEHNGINSKCT). 4 IPT/TIG domains span residues 866–960 (PRIT…YYFV), 962–1046 (PQLL…FEYV), 1049–1148 (PTIT…FVYY), and 1151–1246 (PVFE…LSST). N-linked (GlcNAc...) asparagine glycosylation is found at N981, N992, N1025, N1141, N1189, and N1214. The helical transmembrane segment at 1247 to 1267 (AVISIAGAGGLLIFFIVIVLI) threads the bilayer. Residues 1268–1903 (AYKRKSRESD…QVVAFMSLES (636 aa)) are Cytoplasmic-facing.

This sequence belongs to the plexin family.

The protein localises to the cell membrane. Its function is as follows. Involved in the development of primary sensory neurons especially in branching of the peripheral axons. Interacts with the SLIT2 signaling specifically to promote axonal branching of Rohon-Beard neurons and the trigeminal sensory ganglion neurons. This chain is Plexin-A4 (plxna4), found in Danio rerio (Zebrafish).